Here is a 274-residue protein sequence, read N- to C-terminus: 5-deoxy-glucuronate isomerase (274 aa).

Belongs to the isomerase IolB family.

The catalysed reaction is 5-deoxy-D-glucuronate = 5-dehydro-2-deoxy-D-gluconate. It participates in polyol metabolism; myo-inositol degradation into acetyl-CoA; acetyl-CoA from myo-inositol: step 4/7. Involved in the isomerization of 5-deoxy-glucuronate (5DG) to 5-dehydro-2-deoxy-D-gluconate (DKG or 2-deoxy-5-keto-D-gluconate). This is 5-deoxy-glucuronate isomerase from Geobacillus thermodenitrificans (strain NG80-2).